Here is a 124-residue protein sequence, read N- to C-terminus: Small ribosomal subunit protein uS12 (124 aa).

The segment at 1 to 24 is disordered; sequence MPTINQLVRRPRKPSVSANKAPAL. Aspartate 90 bears the 3-methylthioaspartic acid mark.

The protein belongs to the universal ribosomal protein uS12 family. As to quaternary structure, part of the 30S ribosomal subunit. Contacts proteins S8 and S17. May interact with IF1 in the 30S initiation complex.

In terms of biological role, with S4 and S5 plays an important role in translational accuracy. Its function is as follows. Interacts with and stabilizes bases of the 16S rRNA that are involved in tRNA selection in the A site and with the mRNA backbone. Located at the interface of the 30S and 50S subunits, it traverses the body of the 30S subunit contacting proteins on the other side and probably holding the rRNA structure together. The combined cluster of proteins S8, S12 and S17 appears to hold together the shoulder and platform of the 30S subunit. The protein is Small ribosomal subunit protein uS12 of Anaplasma phagocytophilum (strain HZ).